The primary structure comprises 345 residues: L-threonine 3-dehydrogenase (345 aa).

C42 provides a ligand contact to Zn(2+). Residues T44 and H47 each act as charge relay system in the active site. 6 residues coordinate Zn(2+): H67, E68, C97, C100, C103, and C111. NAD(+) contacts are provided by residues I179, D199, R204, 266–268 (LGI), and 290–291 (IY).

Belongs to the zinc-containing alcohol dehydrogenase family. Homotetramer. Zn(2+) is required as a cofactor.

The protein resides in the cytoplasm. It carries out the reaction L-threonine + NAD(+) = (2S)-2-amino-3-oxobutanoate + NADH + H(+). The protein operates within amino-acid degradation; L-threonine degradation via oxydo-reductase pathway; glycine from L-threonine: step 1/2. Catalyzes the NAD(+)-dependent oxidation of L-threonine to 2-amino-3-ketobutyrate. This is L-threonine 3-dehydrogenase from Sinorhizobium fredii (strain NBRC 101917 / NGR234).